The chain runs to 392 residues: 2'-deamino-2'-hydroxyneamine transaminase (392 aa).

Lys249 carries the N6-(pyridoxal phosphate)lysine modification.

This sequence belongs to the class-III pyridoxal-phosphate-dependent aminotransferase family. Pyridoxal 5'-phosphate is required as a cofactor.

It carries out the reaction neamine + 2-oxoglutarate = 6'-oxoparomamine + L-glutamate. It catalyses the reaction 2'-deamino-2'-hydroxyneamine + 2-oxoglutarate = 2'-deamino-2'-hydroxy-6'-dehydroparomamine + L-glutamate. Its pathway is antibiotic biosynthesis; kanamycin biosynthesis. Its function is as follows. Aminotransferase that has 6'-oxoglucosaminyl:L-glutamate aminotransferase activity by catalyzing pyridoxal-5'-phosphate-mediated transamination leading to the conversion of paromamine to neamine in the biosynthetic pathway of kanamycin B. The chain is 2'-deamino-2'-hydroxyneamine transaminase (kacL) from Streptomyces kanamyceticus.